A 29-amino-acid polypeptide reads, in one-letter code: Trypsin inhibitor 1 (29 aa).

Intrachain disulfides connect cysteine 3–cysteine 20, cysteine 10–cysteine 22, and cysteine 16–cysteine 28.

Belongs to the protease inhibitor I7 (squash-type serine protease inhibitor) family.

It localises to the secreted. In terms of biological role, inhibits trypsin. This is Trypsin inhibitor 1 from Momordica repens.